A 316-amino-acid polypeptide reads, in one-letter code: L-lactate dehydrogenase (316 aa).

NAD(+) contacts are provided by residues valine 15, aspartate 37, lysine 42, tyrosine 68, and 82-83; that span reads GL. Substrate is bound by residues glutamine 85, arginine 91, and 123-126; that span reads NPVD. NAD(+)-binding positions include 121–123 and threonine 146; that span reads ASN. A substrate-binding site is contributed by 151–154; sequence DTSR. Arginine 156 and histidine 171 together coordinate beta-D-fructose 1,6-bisphosphate. Histidine 178 functions as the Proton acceptor in the catalytic mechanism. Tyrosine 222 carries the phosphotyrosine modification. Threonine 231 is a substrate binding site.

The protein belongs to the LDH/MDH superfamily. LDH family. In terms of assembly, homotetramer.

It localises to the cytoplasm. It carries out the reaction (S)-lactate + NAD(+) = pyruvate + NADH + H(+). It functions in the pathway fermentation; pyruvate fermentation to lactate; (S)-lactate from pyruvate: step 1/1. With respect to regulation, allosterically activated by fructose 1,6-bisphosphate (FBP). Its function is as follows. Catalyzes the conversion of lactate to pyruvate. The sequence is that of L-lactate dehydrogenase from Borrelia garinii subsp. bavariensis (strain ATCC BAA-2496 / DSM 23469 / PBi) (Borreliella bavariensis).